The following is a 315-amino-acid chain: Ribosomal RNA small subunit methyltransferase H (315 aa).

Residues G37 to H39, D57, F83, D105, and Q112 each bind S-adenosyl-L-methionine.

It belongs to the methyltransferase superfamily. RsmH family.

It localises to the cytoplasm. The catalysed reaction is cytidine(1402) in 16S rRNA + S-adenosyl-L-methionine = N(4)-methylcytidine(1402) in 16S rRNA + S-adenosyl-L-homocysteine + H(+). Specifically methylates the N4 position of cytidine in position 1402 (C1402) of 16S rRNA. This Pseudomonas fluorescens (strain Pf0-1) protein is Ribosomal RNA small subunit methyltransferase H.